A 535-amino-acid polypeptide reads, in one-letter code: High affinity immunoglobulin alpha and immunoglobulin mu Fc receptor (535 aa).

The N-terminal stretch at M1–S35 is a signal peptide. Residues M36 to R455 lie on the Extracellular side of the membrane. The interval G95–W117 is mediates immunoglobulin Fc fragment-binding. The Ig-like V-type domain maps to G95–T189. An intrachain disulfide couples C102 to C173. Residue N187 is glycosylated (N-linked (GlcNAc...) asparagine). Disordered stretches follow at residues A201–E360 and E405–V430. Composition is skewed to low complexity over residues P208–G220 and T241–S253. Positions K291–E328 are enriched in polar residues. Positions D330–R346 are enriched in basic and acidic residues. Over residues L413–S429 the composition is skewed to polar residues. The helical transmembrane segment at I456–K476 threads the bilayer. The Cytoplasmic portion of the chain corresponds to R477–P535. A disordered region spans residues L507–P535. Residues N513–V528 show a composition bias toward polar residues.

As to quaternary structure, interacts with IGHM; this interaction facilitates the endocytosis of IgM-coated microbes and IgM-antigen immune complexes. In terms of processing, N-glycosylated. In terms of tissue distribution, expressed in several tissues including thymus, spleen, liver, kidney, small and large intestine, testis and placenta. Expressed by oligodendrocytes, B-cells and macrophages but not granulocytes, T-cells or NK cells (at protein level).

It is found in the cell membrane. Functions as a receptor for the Fc fragment of IgA and IgM. Binds IgA and IgM with high affinity and mediates their endocytosis. May function in the immune response to microbes mediated by IgA and IgM. This chain is High affinity immunoglobulin alpha and immunoglobulin mu Fc receptor (Fcamr), found in Mus musculus (Mouse).